We begin with the raw amino-acid sequence, 341 residues long: S-adenosylmethionine:tRNA ribosyltransferase-isomerase (341 aa).

It belongs to the QueA family. As to quaternary structure, monomer.

It is found in the cytoplasm. The catalysed reaction is 7-aminomethyl-7-carbaguanosine(34) in tRNA + S-adenosyl-L-methionine = epoxyqueuosine(34) in tRNA + adenine + L-methionine + 2 H(+). Its pathway is tRNA modification; tRNA-queuosine biosynthesis. In terms of biological role, transfers and isomerizes the ribose moiety from AdoMet to the 7-aminomethyl group of 7-deazaguanine (preQ1-tRNA) to give epoxyqueuosine (oQ-tRNA). The polypeptide is S-adenosylmethionine:tRNA ribosyltransferase-isomerase (Clostridium botulinum (strain Kyoto / Type A2)).